The primary structure comprises 241 residues: Methylthioribulose-1-phosphate dehydratase (241 aa).

C100 serves as a coordination point for substrate. Zn(2+) contacts are provided by H117 and H119. The active-site Proton donor/acceptor is E146. Position 202 (H202) interacts with Zn(2+).

It belongs to the aldolase class II family. MtnB subfamily. It depends on Zn(2+) as a cofactor.

The protein resides in the cytoplasm. It catalyses the reaction 5-(methylsulfanyl)-D-ribulose 1-phosphate = 5-methylsulfanyl-2,3-dioxopentyl phosphate + H2O. The protein operates within amino-acid biosynthesis; L-methionine biosynthesis via salvage pathway; L-methionine from S-methyl-5-thio-alpha-D-ribose 1-phosphate: step 2/6. In terms of biological role, catalyzes the dehydration of methylthioribulose-1-phosphate (MTRu-1-P) into 2,3-diketo-5-methylthiopentyl-1-phosphate (DK-MTP-1-P). This chain is Methylthioribulose-1-phosphate dehydratase, found in Ajellomyces dermatitidis (strain ER-3 / ATCC MYA-2586) (Blastomyces dermatitidis).